The sequence spans 2368 residues: Serine/threonine-protein kinase MEC1 (2368 aa).

The FAT domain maps to 1399-1944 (LLAQRSLETD…LWYITALVNS (546 aa)). Positions 2049-2352 (FGSSYKVFSS…QTETLIQEAT (304 aa)) constitute a PI3K/PI4K catalytic domain. Positions 2055–2061 (VFSSLKK) are G-loop. The binding to the RPA complex stretch occupies residues 2140 to 2368 (SILSTKYESL…KMYIGWLPFW (229 aa)). Positions 2221–2229 (GLGDRHCEN) are catalytic loop. The activation loop stretch occupies residues 2241–2265 (HVDFDCLFEKGKRLPVPEIVPFRLT). The region spanning 2336–2368 (LVLSVAGQTETLIQEATSEDNLSKMYIGWLPFW) is the FATC domain.

The protein belongs to the PI3/PI4-kinase family. ATM subfamily. As to quaternary structure, interacts with LCD1, which is required for localization MEC1 to the RPA complex. Interacts directly with the RPA subunits RFA1 and RFA2.

The protein localises to the nucleus. The catalysed reaction is L-seryl-[protein] + ATP = O-phospho-L-seryl-[protein] + ADP + H(+). The enzyme catalyses L-threonyl-[protein] + ATP = O-phospho-L-threonyl-[protein] + ADP + H(+). Functionally, serine/threonine protein kinase which activates checkpoint signaling upon genotoxic stresses such as ionizing radiation (IR), ultraviolet light (UV), or DNA replication stalling, thereby acting as a DNA damage sensor. Recognizes the substrate consensus sequence [ST]-Q. Recruited in complex with protein LCD1 by the single-strand-binding protein complex RPA to DNA lesions in order to initiate the DNA repair by homologous recombination, after the MRX-complex and TEL1 are displaced. Phosphorylates LCD1 and RPA2, a subunit of RPA, involved in DNA replication, repair and recombination. Phosphorylates RAD9, CHK1 and RAD53, which leads to the activation of the CHK1 and RAD53 kinases involved in DNA damage repair cascade. Phosphorylates histone H2A to form H2AS128ph (gamma-H2A) at sites of DNA damage, also involved in the regulation of DNA damage response mechanism. Also phosphorylates SLX4 and RTT107 which are proteins involved in genome stability. Required for cell growth and meiotic recombination. The protein is Serine/threonine-protein kinase MEC1 (MEC1) of Saccharomyces cerevisiae (strain ATCC 204508 / S288c) (Baker's yeast).